We begin with the raw amino-acid sequence, 149 residues long: Large ribosomal subunit protein uL15 (149 aa).

Residues 14 to 63 (ASRKRVGRGSGSGLGCTSGKGNKGQNARAGGGVRPGFEGGQMPLQRRLPK) form a disordered region. Composition is skewed to gly residues over residues 21 to 35 (RGSGSGLGCTSGKGN) and 42 to 52 (AGGGVRPGFEG).

It belongs to the universal ribosomal protein uL15 family. As to quaternary structure, part of the 50S ribosomal subunit.

Its function is as follows. Binds to the 23S rRNA. The sequence is that of Large ribosomal subunit protein uL15 from Nitratidesulfovibrio vulgaris (strain DSM 19637 / Miyazaki F) (Desulfovibrio vulgaris).